An 870-amino-acid chain; its full sequence is DNA mismatch repair protein MutS (870 aa).

621 to 628 is an ATP binding site; the sequence is GPNMAGKS. Positions 813–834 are disordered; that stretch reads GAPRIAKSRRQRTPDPSPQFSL.

Belongs to the DNA mismatch repair MutS family.

Its function is as follows. This protein is involved in the repair of mismatches in DNA. It is possible that it carries out the mismatch recognition step. This protein has a weak ATPase activity. The chain is DNA mismatch repair protein MutS from Pelobacter propionicus (strain DSM 2379 / NBRC 103807 / OttBd1).